The chain runs to 535 residues: ATP-dependent RNA helicase DBP3 (535 aa).

Positions 1–21 (MGSSSKSEKRKYDDGEELLER) are enriched in basic and acidic residues. Positions 1-96 (MGSSSKSEKR…TSYGYVQSSK (96 aa)) are disordered. A compositionally biased stretch (basic residues) spans 35–54 (KKDKKEKKDKKEKKDKKEKK). Positions 55–72 (DKKEKNKESKEAEARDDS) are enriched in basic and acidic residues. Over residues 79–88 (SSSSSTESTS) the composition is skewed to low complexity. The Q motif signature appears at 128–154 (LSFDQIKLQKDVSSKLTKFPKPTPIQS). One can recognise a Helicase ATP-binding domain in the interval 157 to 329 (WPFLLDGKDV…NNFMNQPVKV (173 aa)). 170 to 177 (AETGSGKT) contributes to the ATP binding site. A DEAD box motif is present at residues 276–279 (DEAD). In terms of domain architecture, Helicase C-terminal spans 362-508 (NLLQKYQNTG…PVPEALLKYG (147 aa)).

This sequence belongs to the DEAD box helicase family. DDX5/DBP2 subfamily.

Its subcellular location is the nucleus. It localises to the nucleolus. The enzyme catalyses ATP + H2O = ADP + phosphate + H(+). Its function is as follows. ATP-dependent RNA helicase required for 60S ribosomal subunit synthesis. Involved in efficient pre-rRNA processing, predominantly at site A3, which is necessary for the normal formation of 25S and 5.8S rRNAs. The polypeptide is ATP-dependent RNA helicase DBP3 (DBP3) (Lodderomyces elongisporus (strain ATCC 11503 / CBS 2605 / JCM 1781 / NBRC 1676 / NRRL YB-4239) (Yeast)).